The sequence spans 400 residues: Phosphoglycerate kinase (400 aa).

Residues 21 to 23, Arg-37, 60 to 63, Arg-121, and Arg-154 each bind substrate; these read DFN and HLGR. Residues Lys-204, Glu-326, and 355–358 each bind ATP; that span reads GGDS.

The protein belongs to the phosphoglycerate kinase family. As to quaternary structure, monomer.

It localises to the cytoplasm. The enzyme catalyses (2R)-3-phosphoglycerate + ATP = (2R)-3-phospho-glyceroyl phosphate + ADP. It functions in the pathway carbohydrate degradation; glycolysis; pyruvate from D-glyceraldehyde 3-phosphate: step 2/5. The protein is Phosphoglycerate kinase of Chloroflexus aurantiacus (strain ATCC 29366 / DSM 635 / J-10-fl).